Here is a 530-residue protein sequence, read N- to C-terminus: Pentatricopeptide repeat-containing protein At3g51320 (530 aa).

10 PPR repeats span residues 82 to 116 (KLYCANPVFKAYLVSSSPKQALGFYFDILRFGFVP), 117 to 151 (DSYTFVSLISCIEKTCCVDSGKMCHGQAIKHGCDQ), 152 to 182 (VLPVQNSLMHMYTCCGALDLAKKLFVEIPKR), 183 to 217 (DIVSWNSIIAGMVRNGDVLAAHKLFDEMPDKNIIS), 218 to 248 (WNIMISAYLGANNPGVSISLFREMVRAGFQG), 249 to 283 (NESTLVLLLNACGRSARLKEGRSVHASLIRTFLNS), 284 to 314 (SVVIDTALIDMYGKCKEVGLARRIFDSLSIR), 315 to 349 (NKVTWNVMILAHCLHGRPEGGLELFEAMINGMLRP), 350 to 380 (DEVTFVGVLCGCARAGLVSQGQSYYSLMVDE), and 386 to 420 (NFGHQWCMANLYSSAGFPEEAEEALKNLPDEDVTP). The segment at 424-499 (KWANLLSSSR…IPGCGLVDLK (76 aa)) is type E motif.

The protein belongs to the PPR family. PCMP-E subfamily.

The polypeptide is Pentatricopeptide repeat-containing protein At3g51320 (Arabidopsis thaliana (Mouse-ear cress)).